Consider the following 244-residue polypeptide: Phosphoadenosine 5'-phosphosulfate reductase (244 aa).

The active-site Nucleophile; cysteine thiosulfonate intermediate is the Cys-239.

It belongs to the PAPS reductase family. CysH subfamily.

Its subcellular location is the cytoplasm. It carries out the reaction [thioredoxin]-disulfide + sulfite + adenosine 3',5'-bisphosphate + 2 H(+) = [thioredoxin]-dithiol + 3'-phosphoadenylyl sulfate. It participates in sulfur metabolism; hydrogen sulfide biosynthesis; sulfite from sulfate: step 3/3. Catalyzes the formation of sulfite from phosphoadenosine 5'-phosphosulfate (PAPS) using thioredoxin as an electron donor. The polypeptide is Phosphoadenosine 5'-phosphosulfate reductase (Pectobacterium carotovorum subsp. carotovorum (strain PC1)).